The following is a 655-amino-acid chain: Sphingomyelin phosphodiesterase 3 (655 aa).

Topologically, residues Met1–Asn10 are cytoplasmic. Residues Ser11–Val31 constitute an intramembrane region (helical). Topologically, residues Asp32–Thr64 are cytoplasmic. 3 S-palmitoyl cysteine lipidation sites follow: Cys53, Cys54, and Cys59. Positions Pro65 to Trp85 form an intramembrane region, helical. Topologically, residues Ser86 to Ala655 are cytoplasmic. At Ser178 the chain carries Phosphoserine. A disordered region spans residues Val209–Asn318. Composition is skewed to basic and acidic residues over residues Tyr211 to Asp221 and Gly246 to Glu255. At Ser289 the chain carries Phosphoserine. Glu362 contacts Mg(2+). Residues Cys395 and Cys396 are each lipidated (S-palmitoyl cysteine). His639 (proton acceptor) is an active-site residue.

It belongs to the neutral sphingomyelinase family. The cofactor is Mg(2+). Palmitoylated, palmitoylation-deficient proteins are targeted for lysosomal degradation. Predominantly expressed in brain (at protein level).

Its subcellular location is the golgi apparatus membrane. The protein localises to the cell membrane. The enzyme catalyses a sphingomyelin + H2O = phosphocholine + an N-acylsphing-4-enine + H(+). The catalysed reaction is N-(15Z-tetracosenoyl)sphing-4-enine-1-phosphocholine + H2O = N-(15Z-tetracosenoyl)-sphing-4-enine + phosphocholine + H(+). It catalyses the reaction N-(tetracosanoyl)-sphing-4-enine-1-phosphocholine + H2O = N-tetracosanoyl-sphing-4-enine + phosphocholine + H(+). It carries out the reaction N-(hexadecanoyl)-sphing-4-enine-1-phosphocholine + H2O = N-hexadecanoylsphing-4-enine + phosphocholine + H(+). The enzyme catalyses an N-(acyl)-sphingosylphosphocholine + H2O = an N-acyl-sphingoid base + phosphocholine + H(+). The catalysed reaction is 1-hexadecanoyl-sn-glycero-3-phosphocholine + H2O = 1-hexadecanoyl-sn-glycerol + phosphocholine + H(+). It catalyses the reaction 1-O-octadecyl-sn-glycero-3-phosphocholine + H2O = 1-O-octadecyl-sn-glycerol + phosphocholine + H(+). It carries out the reaction a sphingosylphosphocholine + H2O = a sphingoid base + phosphocholine + H(+). It functions in the pathway lipid metabolism; sphingolipid metabolism. With respect to regulation, inhibited by nSMase inhibitor GW4869. Binding of anionic phospholipids (APLs) such as phosphatidylserine (PS) and phosphatidic acid (PA) increases enzymatic activity. Catalyzes the hydrolysis of sphingomyelin to form ceramide and phosphocholine. Ceramide mediates numerous cellular functions, such as apoptosis and growth arrest, and is capable of regulating these 2 cellular events independently. Also hydrolyzes sphingosylphosphocholine. Regulates the cell cycle by acting as a growth suppressor in confluent cells. Probably acts as a regulator of postnatal development and participates in bone and dentin mineralization. Binds to anionic phospholipids (APLs) such as phosphatidylserine (PS) and phosphatidic acid (PA) that modulate enzymatic activity and subcellular location. May be involved in IL-1-beta-induced JNK activation in hepatocytes. May act as a mediator in transcriptional regulation of NOS2/iNOS via the NF-kappa-B activation under inflammatory conditions. This is Sphingomyelin phosphodiesterase 3 from Mus musculus (Mouse).